We begin with the raw amino-acid sequence, 360 residues long: Phenylalanine--tRNA ligase alpha subunit (360 aa).

Residue E260 coordinates Mg(2+).

It belongs to the class-II aminoacyl-tRNA synthetase family. Phe-tRNA synthetase alpha subunit type 1 subfamily. Tetramer of two alpha and two beta subunits. Requires Mg(2+) as cofactor.

It localises to the cytoplasm. It catalyses the reaction tRNA(Phe) + L-phenylalanine + ATP = L-phenylalanyl-tRNA(Phe) + AMP + diphosphate + H(+). This Cereibacter sphaeroides (strain ATCC 17029 / ATH 2.4.9) (Rhodobacter sphaeroides) protein is Phenylalanine--tRNA ligase alpha subunit.